A 262-amino-acid polypeptide reads, in one-letter code: NAD-dependent protein deacylase (262 aa).

Positions 1-262 constitute a Deacetylase sirtuin-type domain; the sequence is MSNLRRAAEA…AALSPPGVPT (262 aa). 22 to 42 is an NAD(+) binding site; it reads GAGISADSGIPTFRDKLTGLW. Substrate is bound by residues Y67 and R70. 101 to 104 serves as a coordination point for NAD(+); it reads QNID. H119 acts as the Proton acceptor in catalysis. 4 residues coordinate Zn(2+): C127, C130, C155, and C158. NAD(+) is bound by residues 195–197, 221–223, and A239; these read GTS and NLE.

Belongs to the sirtuin family. Class III subfamily. It depends on Zn(2+) as a cofactor.

It localises to the cytoplasm. It carries out the reaction N(6)-acetyl-L-lysyl-[protein] + NAD(+) + H2O = 2''-O-acetyl-ADP-D-ribose + nicotinamide + L-lysyl-[protein]. The enzyme catalyses N(6)-succinyl-L-lysyl-[protein] + NAD(+) + H2O = 2''-O-succinyl-ADP-D-ribose + nicotinamide + L-lysyl-[protein]. In terms of biological role, NAD-dependent lysine deacetylase and desuccinylase that specifically removes acetyl and succinyl groups on target proteins. Modulates the activities of several proteins which are inactive in their acylated form. The chain is NAD-dependent protein deacylase from Pseudomonas putida (strain ATCC 47054 / DSM 6125 / CFBP 8728 / NCIMB 11950 / KT2440).